Here is a 1040-residue protein sequence, read N- to C-terminus: Multidrug resistance protein MdtB (1040 aa).

The next 12 helical transmembrane spans lie at Phe-16–Ile-36, Leu-347–Ala-367, Ile-369–Leu-389, Leu-396–Ile-416, Ile-440–Phe-460, Phe-472–Pro-492, Trp-537–Ile-557, Leu-863–Ile-883, Phe-888–Ala-908, Ile-911–Val-931, Ile-968–Val-988, and Ile-998–Ile-1018.

The protein belongs to the resistance-nodulation-cell division (RND) (TC 2.A.6) family. MdtB subfamily. As to quaternary structure, part of a tripartite efflux system composed of MdtA, MdtB and MdtC. MdtB forms a heteromultimer with MdtC.

It localises to the cell inner membrane. In terms of biological role, the MdtABC tripartite complex confers resistance against novobiocin and deoxycholate. The polypeptide is Multidrug resistance protein MdtB (Escherichia coli (strain SE11)).